The chain runs to 91 residues: UPF0358 protein SSP1677 (91 aa).

It belongs to the UPF0358 family.

The chain is UPF0358 protein SSP1677 from Staphylococcus saprophyticus subsp. saprophyticus (strain ATCC 15305 / DSM 20229 / NCIMB 8711 / NCTC 7292 / S-41).